The primary structure comprises 248 residues: 2,3-bisphosphoglycerate-dependent phosphoglycerate mutase (248 aa).

Substrate contacts are provided by residues 8-15 (RHGESTWN), 21-22 (TG), Arg60, 87-90 (ERHY), Lys98, 114-115 (RR), and 183-184 (GN). The active-site Tele-phosphohistidine intermediate is the His9. Catalysis depends on Glu87, which acts as the Proton donor/acceptor.

This sequence belongs to the phosphoglycerate mutase family. BPG-dependent PGAM subfamily.

It catalyses the reaction (2R)-2-phosphoglycerate = (2R)-3-phosphoglycerate. It functions in the pathway carbohydrate degradation; glycolysis; pyruvate from D-glyceraldehyde 3-phosphate: step 3/5. Catalyzes the interconversion of 2-phosphoglycerate and 3-phosphoglycerate. The chain is 2,3-bisphosphoglycerate-dependent phosphoglycerate mutase from Solibacter usitatus (strain Ellin6076).